A 137-amino-acid polypeptide reads, in one-letter code: Gonadotropin subunit beta-2 (137 aa).

The N-terminal stretch at 1-24 (MLPFMLSSFLGASPSIWPLAPAEA) is a signal peptide. Disulfide bonds link cysteine 30-cysteine 76, cysteine 44-cysteine 91, cysteine 47-cysteine 129, cysteine 55-cysteine 107, cysteine 59-cysteine 109, and cysteine 112-cysteine 119. The N-linked (GlcNAc...) asparagine glycan is linked to asparagine 34.

It belongs to the glycoprotein hormones subunit beta family. As to quaternary structure, heterodimer of an alpha and a beta chain.

Its subcellular location is the secreted. Its function is as follows. Involved in gametogenesis and steroidogenesis. The chain is Gonadotropin subunit beta-2 (cgbb) from Acanthopagrus latus (Yellowfin seabream).